Here is a 389-residue protein sequence, read N- to C-terminus: Succinate--CoA ligase [ADP-forming] subunit beta (389 aa).

An ATP-grasp domain is found at 9–244 (KELLRQFNVP…IDEEDAAEIE (236 aa)). ATP contacts are provided by residues Lys46, 53-55 (GRG), Glu99, Ala102, and Glu107. Positions 199 and 213 each coordinate Mg(2+). Residues Asn264 and 321–323 (GIM) each bind substrate.

Belongs to the succinate/malate CoA ligase beta subunit family. In terms of assembly, heterotetramer of two alpha and two beta subunits. The cofactor is Mg(2+).

It carries out the reaction succinate + ATP + CoA = succinyl-CoA + ADP + phosphate. The enzyme catalyses GTP + succinate + CoA = succinyl-CoA + GDP + phosphate. It participates in carbohydrate metabolism; tricarboxylic acid cycle; succinate from succinyl-CoA (ligase route): step 1/1. In terms of biological role, succinyl-CoA synthetase functions in the citric acid cycle (TCA), coupling the hydrolysis of succinyl-CoA to the synthesis of either ATP or GTP and thus represents the only step of substrate-level phosphorylation in the TCA. The beta subunit provides nucleotide specificity of the enzyme and binds the substrate succinate, while the binding sites for coenzyme A and phosphate are found in the alpha subunit. This chain is Succinate--CoA ligase [ADP-forming] subunit beta, found in Polynucleobacter asymbioticus (strain DSM 18221 / CIP 109841 / QLW-P1DMWA-1) (Polynucleobacter necessarius subsp. asymbioticus).